Reading from the N-terminus, the 304-residue chain is Oxygen-dependent coproporphyrinogen-III oxidase (304 aa).

Serine 94 lines the substrate pocket. Histidine 98 and histidine 108 together coordinate a divalent metal cation. Histidine 108 (proton donor) is an active-site residue. 110–112 (NVR) is a binding site for substrate. A divalent metal cation contacts are provided by histidine 147 and histidine 177. The important for dimerization stretch occupies residues 242-277 (YVEFNLVYDRGTLFGLQTGGRTESILMSMPPLVRWQ). Residue 260 to 262 (GGR) coordinates substrate.

It belongs to the aerobic coproporphyrinogen-III oxidase family. Homodimer. The cofactor is a divalent metal cation.

The protein localises to the cytoplasm. It carries out the reaction coproporphyrinogen III + O2 + 2 H(+) = protoporphyrinogen IX + 2 CO2 + 2 H2O. Its pathway is porphyrin-containing compound metabolism; protoporphyrin-IX biosynthesis; protoporphyrinogen-IX from coproporphyrinogen-III (O2 route): step 1/1. Involved in the heme biosynthesis. Catalyzes the aerobic oxidative decarboxylation of propionate groups of rings A and B of coproporphyrinogen-III to yield the vinyl groups in protoporphyrinogen-IX. This chain is Oxygen-dependent coproporphyrinogen-III oxidase, found in Shewanella amazonensis (strain ATCC BAA-1098 / SB2B).